Reading from the N-terminus, the 362-residue chain is Protein Wnt-16 (362 aa).

A signal peptide spans 1–29 (MDRAALLGLSRLCALWAAVLALFPCGAQG). 3 cysteine pairs are disulfide-bonded: cysteine 81–cysteine 92, cysteine 136–cysteine 144, and cysteine 146–cysteine 165. Asparagine 140 carries N-linked (GlcNAc...) asparagine glycosylation. Asparagine 186 is a glycosylation site (N-linked (GlcNAc...) asparagine). 8 disulfides stabilise this stretch: cysteine 218-cysteine 232, cysteine 220-cysteine 227, cysteine 291-cysteine 322, cysteine 307-cysteine 317, cysteine 321-cysteine 361, cysteine 337-cysteine 352, cysteine 339-cysteine 349, and cysteine 344-cysteine 345. Serine 224 is lipidated: O-palmitoleoyl serine; by PORCN. A glycan (N-linked (GlcNAc...) asparagine) is linked at asparagine 308.

This sequence belongs to the Wnt family. Palmitoleoylation is required for efficient binding to frizzled receptors. Depalmitoleoylation leads to Wnt signaling pathway inhibition.

The protein localises to the secreted. Its subcellular location is the extracellular space. It localises to the extracellular matrix. Its function is as follows. Ligand for members of the frizzled family of seven transmembrane receptors. Probable developmental protein. May be a signaling molecule which affects the development of discrete regions of tissues. Is likely to signal over only few cell diameters. This is Protein Wnt-16 (WNT16) from Bos taurus (Bovine).